An 85-amino-acid chain; its full sequence is ATP synthase subunit c (85 aa).

2 consecutive transmembrane segments (helical) span residues 10–30 (IAVAIIVGLCAVGTAIGFAVL) and 53–73 (FIIAGLLDAVPMIGIVIALLF).

The protein belongs to the ATPase C chain family. As to quaternary structure, F-type ATPases have 2 components, F(1) - the catalytic core - and F(0) - the membrane proton channel. F(1) has five subunits: alpha(3), beta(3), gamma(1), delta(1), epsilon(1). F(0) has three main subunits: a(1), b(2) and c(10-14). The alpha and beta chains form an alternating ring which encloses part of the gamma chain. F(1) is attached to F(0) by a central stalk formed by the gamma and epsilon chains, while a peripheral stalk is formed by the delta and b chains.

It is found in the cell inner membrane. In terms of biological role, f(1)F(0) ATP synthase produces ATP from ADP in the presence of a proton or sodium gradient. F-type ATPases consist of two structural domains, F(1) containing the extramembraneous catalytic core and F(0) containing the membrane proton channel, linked together by a central stalk and a peripheral stalk. During catalysis, ATP synthesis in the catalytic domain of F(1) is coupled via a rotary mechanism of the central stalk subunits to proton translocation. Key component of the F(0) channel; it plays a direct role in translocation across the membrane. A homomeric c-ring of between 10-14 subunits forms the central stalk rotor element with the F(1) delta and epsilon subunits. This Vibrio cholerae serotype O1 (strain ATCC 39315 / El Tor Inaba N16961) protein is ATP synthase subunit c.